A 238-amino-acid polypeptide reads, in one-letter code: 7-cyano-7-deazaguanine synthase (238 aa).

14 to 24 (FSGGQDSTTCL) contributes to the ATP binding site. 4 residues coordinate Zn(2+): cysteine 195, cysteine 204, cysteine 207, and cysteine 210.

It belongs to the QueC family. Zn(2+) is required as a cofactor.

It catalyses the reaction 7-carboxy-7-deazaguanine + NH4(+) + ATP = 7-cyano-7-deazaguanine + ADP + phosphate + H2O + H(+). The protein operates within purine metabolism; 7-cyano-7-deazaguanine biosynthesis. In terms of biological role, catalyzes the ATP-dependent conversion of 7-carboxy-7-deazaguanine (CDG) to 7-cyano-7-deazaguanine (preQ(0)). In Baumannia cicadellinicola subsp. Homalodisca coagulata, this protein is 7-cyano-7-deazaguanine synthase.